The following is a 1738-amino-acid chain: Interaptin (1738 aa).

The actin-binding stretch occupies residues 1–248 (MEHSTPLNEE…TYISLFPKVY (248 aa)). Over 1–1705 (MEHSTPLNEE…RIFPSKNTRP (1705 aa)) the chain is Cytoplasmic. 2 Calponin-homology (CH) domains span residues 22-128 (IAQK…LRYQ) and 146-249 (TKPS…KVYQ). Disordered regions lie at residues 285–350 (SKST…SNLS), 1068–1090 (IQQL…SEKD), and 1589–1627 (LQQQ…PNQI). A compositionally biased stretch (low complexity) spans 292 to 301 (QQNQQQQQQN). Residues 302–316 (LLSPNSYRNSISFSK) are compositionally biased toward polar residues. 3 stretches are compositionally biased toward low complexity: residues 317-344 (SPSF…NSTT), 1068-1086 (IQQL…SNQL), and 1589-1617 (LQQQ…SSTP). The stretch at 373-1598 (EESRVIEKIV…LQQQKQQQQQ (1226 aa)) forms a coiled coil. The helical; Anchor for type IV membrane protein transmembrane segment at 1706–1726 (IFDWRALFFIGAAVLAISTLF) threads the bilayer.

This sequence belongs to the alpha-actinin family.

It localises to the nucleus membrane. The protein resides in the endoplasmic reticulum membrane. It is found in the golgi apparatus. Its subcellular location is the golgi stack membrane. The protein localises to the cytoplasm. It localises to the cytoskeleton. The protein resides in the microtubule organizing center. It is found in the centrosome. Its function is as follows. May function as linker between cellular membranes and the actin cytoskeleton. Required for normal development of fruiting bodies. The sequence is that of Interaptin (abpD) from Dictyostelium discoideum (Social amoeba).